A 70-amino-acid chain; its full sequence is uncharacterized protein (70 aa).

This is an uncharacterized protein from Escherichia coli (strain K12).